Here is a 208-residue protein sequence, read N- to C-terminus: Outer-membrane lipoprotein carrier protein (208 aa).

The signal sequence occupies residues Met-1–Ala-21.

The protein belongs to the LolA family. In terms of assembly, monomer.

It localises to the periplasm. Its function is as follows. Participates in the translocation of lipoproteins from the inner membrane to the outer membrane. Only forms a complex with a lipoprotein if the residue after the N-terminal Cys is not an aspartate (The Asp acts as a targeting signal to indicate that the lipoprotein should stay in the inner membrane). The protein is Outer-membrane lipoprotein carrier protein of Pseudomonas aeruginosa (strain UCBPP-PA14).